The following is a 178-amino-acid chain: Caveolin-1 (178 aa).

Ser2 carries the N-acetylserine modification. A Phosphoserine modification is found at Ser2. The interval 2 to 94 (SGGKYVDSEG…WKASFTTFTV (93 aa)) is required for homooligomerization. The Cytoplasmic segment spans residues 2-104 (SGGKYVDSEG…TKYWFYRLLS (103 aa)). Lys5 carries the N6-acetyllysine; alternate modification. A Glycyl lysine isopeptide (Lys-Gly) (interchain with G-Cter in ubiquitin); alternate cross-link involves residue Lys5. Tyr6 bears the Phosphotyrosine mark. Residue Ser9 is modified to Phosphoserine. Position 14 is a phosphotyrosine; by ABL1 (Tyr14). Phosphotyrosine is present on Tyr25. Glycyl lysine isopeptide (Lys-Gly) (interchain with G-Cter in ubiquitin) cross-links involve residues Lys26, Lys30, Lys39, Lys47, and Lys57. The segment at 82-94 (DGIWKASFTTFTV) is interaction with CAVIN3. The segment at residues 105–125 (ALFGIPMALIWGIYFAILSFL) is an intramembrane region (helical). The Cytoplasmic portion of the chain corresponds to 126–178 (HIWAVVPCIKSFLIEIQCVSRVYSIYVHTFCDPFFEAVGKIFSSIRINMQKEI). The segment at 131 to 142 (VPCIKSFLIEIQ) is interacts with SPRY1, SPRY2, SPRY3 and SPRY4. 3 S-palmitoyl cysteine lipidation sites follow: Cys133, Cys143, and Cys156. Residues 149 to 160 (SIYVHTFCDPFF) form an interacts with SPRY1, SPRY2, and SPRY4 region. The interval 167 to 178 (FSSIRINMQKEI) is interacts with SPRY1, SPRY2, SPRY3 and SPRY4.

Belongs to the caveolin family. In terms of assembly, homooligomer. Interacts with GLIPR2. Interacts with NOSTRIN. Interacts with SNAP25 and STX1A. Interacts (via the N-terminus) with DPP4; the interaction is direct. Interacts with CTNNB1, CDH1 and JUP. Interacts with PACSIN2; this interaction induces membrane tubulation. Interacts with SLC7A9. Interacts with BMX and BTK. Interacts with TGFBR1. Interacts with CAVIN3 (via leucine-zipper domain) in a cholesterol-sensitive manner. Interacts with CAVIN1. Interacts with EHD2 in a cholesterol-dependent manner. Forms a ternary complex with UBXN6 and VCP; mediates CAV1 targeting to lysosomes for degradation. Interacts with ABCG1; this interaction regulates ABCG1-mediated cholesterol efflux. Interacts with NEU3; this interaction enhances NEU3 sialidase activity within caveola. Interacts (via C-terminus) with SPRY1, SPRY2 (via C-terminus), SPRY3, and SPRY4. Interacts with IGFBP5; this interaction allows trafficking of IGFBP5 from the plasma membrane to the nucleus. Post-translationally, phosphorylated at Tyr-14 by ABL1 in response to oxidative stress. In terms of processing, ubiquitinated. Undergo monoubiquitination and multi- and/or polyubiquitination. Monoubiquitination of N-terminal lysines promotes integration in a ternary complex with UBXN6 and VCP which promotes oligomeric CAV1 targeting to lysosomes for degradation. Ubiquitinated by ZNRF1; leading to degradation and modulation of the TLR4-mediated immune response.

The protein localises to the golgi apparatus membrane. It is found in the cell membrane. Its subcellular location is the membrane. It localises to the caveola. The protein resides in the membrane raft. Functionally, may act as a scaffolding protein within caveolar membranes. Forms a stable heterooligomeric complex with CAV2 that targets to lipid rafts and drives caveolae formation. Mediates the recruitment of CAVIN proteins (CAVIN1/2/3/4) to the caveolae. Interacts directly with G-protein alpha subunits and can functionally regulate their activity. Involved in the costimulatory signal essential for T-cell receptor (TCR)-mediated T-cell activation. Its binding to DPP4 induces T-cell proliferation and NF-kappa-B activation in a T-cell receptor/CD3-dependent manner. Recruits CTNNB1 to caveolar membranes and may regulate CTNNB1-mediated signaling through the Wnt pathway. Negatively regulates TGFB1-mediated activation of SMAD2/3 by mediating the internalization of TGFBR1 from membrane rafts leading to its subsequent degradation. Binds 20(S)-hydroxycholesterol (20(S)-OHC). The chain is Caveolin-1 (CAV1) from Mustela putorius furo (European domestic ferret).